We begin with the raw amino-acid sequence, 344 residues long: Glycerol-3-phosphate dehydrogenase [NAD(P)+] (344 aa).

NADPH-binding residues include W11, R31, R32, and K105. The sn-glycerol 3-phosphate site is built by K105, G133, and S135. A137 is a binding site for NADPH. Sn-glycerol 3-phosphate-binding residues include K188, D241, S251, R252, and N253. Residue K188 is the Proton acceptor of the active site. Residue R252 participates in NADPH binding. E278 lines the NADPH pocket.

Belongs to the NAD-dependent glycerol-3-phosphate dehydrogenase family.

It localises to the cytoplasm. It carries out the reaction sn-glycerol 3-phosphate + NAD(+) = dihydroxyacetone phosphate + NADH + H(+). It catalyses the reaction sn-glycerol 3-phosphate + NADP(+) = dihydroxyacetone phosphate + NADPH + H(+). The protein operates within membrane lipid metabolism; glycerophospholipid metabolism. Catalyzes the reduction of the glycolytic intermediate dihydroxyacetone phosphate (DHAP) to sn-glycerol 3-phosphate (G3P), the key precursor for phospholipid synthesis. This Acidithiobacillus ferrooxidans (strain ATCC 23270 / DSM 14882 / CIP 104768 / NCIMB 8455) (Ferrobacillus ferrooxidans (strain ATCC 23270)) protein is Glycerol-3-phosphate dehydrogenase [NAD(P)+].